A 317-amino-acid chain; its full sequence is Acetyl-coenzyme A carboxylase carboxyl transferase subunit alpha (317 aa).

The 254-residue stretch at 40 to 293 folds into the CoA carboxyltransferase C-terminal domain; it reads LEKRSADALK…GDIIAASLRS (254 aa).

This sequence belongs to the AccA family. In terms of assembly, acetyl-CoA carboxylase is a heterohexamer composed of biotin carboxyl carrier protein (AccB), biotin carboxylase (AccC) and two subunits each of ACCase subunit alpha (AccA) and ACCase subunit beta (AccD).

It localises to the cytoplasm. It carries out the reaction N(6)-carboxybiotinyl-L-lysyl-[protein] + acetyl-CoA = N(6)-biotinyl-L-lysyl-[protein] + malonyl-CoA. It participates in lipid metabolism; malonyl-CoA biosynthesis; malonyl-CoA from acetyl-CoA: step 1/1. Component of the acetyl coenzyme A carboxylase (ACC) complex. First, biotin carboxylase catalyzes the carboxylation of biotin on its carrier protein (BCCP) and then the CO(2) group is transferred by the carboxyltransferase to acetyl-CoA to form malonyl-CoA. The chain is Acetyl-coenzyme A carboxylase carboxyl transferase subunit alpha from Brucella abortus (strain S19).